We begin with the raw amino-acid sequence, 522 residues long: Response regulator mcs4 (522 aa).

A disordered region spans residues 148 to 274; it reads DSLESPVSAP…RSISHSSLYT (127 aa). Over residues 174-194 the composition is skewed to polar residues; that stretch reads NLRNASRTRSHQTLPSSNVNK. Basic and acidic residues predominate over residues 244–255; that stretch reads RSDESTAEKLAK. Residues 260 to 274 are compositionally biased toward polar residues; that stretch reads TPTNSRSISHSSLYT. Positions 363 to 505 constitute a Response regulatory domain; sequence NVLIVEDNII…WLEKKITEWG (143 aa). Residue Asp-412 is modified to 4-aspartylphosphate.

Its subcellular location is the cytoplasm. Response regulator that coordinately controls the stress activated wak1-wis1-sty1 MAP kinase pathway and fission yeast cell cycle. The chain is Response regulator mcs4 (mcs4) from Schizosaccharomyces pombe (strain 972 / ATCC 24843) (Fission yeast).